A 368-amino-acid chain; its full sequence is Polynucleotide 5'-hydroxyl-kinase NOL9 (368 aa).

An ATP-binding site is contributed by 36–43; sequence GPKNSGKS.

The protein belongs to the Clp1 family. NOL9/GRC3 subfamily.

The protein localises to the nucleus. Its subcellular location is the nucleolus. Functionally, polynucleotide 5'-kinase involved in rRNA processing. This chain is Polynucleotide 5'-hydroxyl-kinase NOL9, found in Arabidopsis thaliana (Mouse-ear cress).